Consider the following 470-residue polypeptide: Zinc finger CCCH domain-containing protein 7 (470 aa).

The tract at residues 122–144 is disordered; the sequence is AYSKKESEKQSGQNNTSTASRNH. Positions 131–142 are enriched in polar residues; that stretch reads QSGQNNTSTASR. C3H1-type zinc fingers lie at residues 240–269, 273–294, 295–321, 322–349, and 350–372; these read AKKK…HDPS, VCTK…HKVI, PERM…HVHV, NPIA…HSYN, and CPVF…HPKN. The span at 370–381 shows a compositional bias: basic residues; sequence PKNQSKGRKRKR. Residues 370-389 form a disordered region; it reads PKNQSKGRKRKRTNEPSQKN.

Functionally, possesses RNA-binding and ribonuclease activities in vitro. This is Zinc finger CCCH domain-containing protein 7 from Arabidopsis thaliana (Mouse-ear cress).